A 741-amino-acid polypeptide reads, in one-letter code: NAD(P)H-quinone oxidoreductase subunit 5, chloroplastic (741 aa).

Helical transmembrane passes span 9-29 (WIIP…LLLF), 40-60 (WAVP…ELAI), 89-109 (IDPL…LVLI), 125-145 (FSYL…SNLI), 147-167 (IYIF…FWFA), 185-205 (GDFG…SFEF), 219-239 (NGVN…GAVA), 258-278 (TPIS…FLVA), 280-300 (LLPL…IGVI), 327-347 (LGYI…FHLI), 396-416 (TTFF…CFWS), 425-445 (WLYS…TAFY), 547-567 (LLPL…GIPF), 606-626 (ILSV…YGSV), and 721-741 (SYIF…YFFI).

This sequence belongs to the complex I subunit 5 family. As to quaternary structure, NDH is composed of at least 16 different subunits, 5 of which are encoded in the nucleus.

The protein resides in the plastid. It is found in the chloroplast thylakoid membrane. The catalysed reaction is a plastoquinone + NADH + (n+1) H(+)(in) = a plastoquinol + NAD(+) + n H(+)(out). It catalyses the reaction a plastoquinone + NADPH + (n+1) H(+)(in) = a plastoquinol + NADP(+) + n H(+)(out). Functionally, NDH shuttles electrons from NAD(P)H:plastoquinone, via FMN and iron-sulfur (Fe-S) centers, to quinones in the photosynthetic chain and possibly in a chloroplast respiratory chain. The immediate electron acceptor for the enzyme in this species is believed to be plastoquinone. Couples the redox reaction to proton translocation, and thus conserves the redox energy in a proton gradient. This chain is NAD(P)H-quinone oxidoreductase subunit 5, chloroplastic (ndhF), found in Ceratophyllum demersum (Rigid hornwort).